The primary structure comprises 873 residues: Bifunctional heparan sulfate N-deacetylase/N-sulfotransferase 3 (873 aa).

The Cytoplasmic segment spans residues 1–13 (MSFIMKLHRHFQR). A helical; Signal-anchor for type II membrane protein transmembrane segment spans residues 14–34 (TVILLATFCMVSIIISAYYLY). The Lumenal portion of the chain corresponds to 35–873 (SGYKQENELS…WLRQELQKVR (839 aa)). The interval 36 to 589 (GYKQENELSE…KRHRDIWSKE (554 aa)) is heparan sulfate N-deacetylase 3. Residues N146, N226, N342, and N392 are each glycosylated (N-linked (GlcNAc...) asparagine). Residues 590 to 873 (KTCDRLPKFL…WLRQELQKVR (284 aa)) are heparan sulfate N-sulfotransferase 3. The For sulfotransferase activity role is filled by K605. Residue 605–609 (KTGTT) participates in 3'-phosphoadenylyl sulfate binding. N-linked (GlcNAc...) asparagine glycosylation is present at N658. S703 is a 3'-phosphoadenylyl sulfate binding site. Residue N794 is glycosylated (N-linked (GlcNAc...) asparagine). C809 and C819 are joined by a disulfide. 824–828 (KGRKY) contributes to the 3'-phosphoadenylyl sulfate binding site.

This sequence belongs to the sulfotransferase 1 family. NDST subfamily. In terms of assembly, monomer. Expressed in brain, kidney, liver, fetal and adult lung, adult pancreas, placenta, fetal spleen and fetal thymus. Not detected in adult/ fetal heart and skeletal muscle.

Its subcellular location is the golgi apparatus membrane. It catalyses the reaction alpha-D-glucosaminyl-[heparan sulfate](n) + 3'-phosphoadenylyl sulfate = N-sulfo-alpha-D-glucosaminyl-[heparan sulfate](n) + adenosine 3',5'-bisphosphate + 2 H(+). The protein operates within glycan metabolism; heparan sulfate biosynthesis. It functions in the pathway glycan metabolism; heparin biosynthesis. Essential bifunctional enzyme that catalyzes both the N-deacetylation and the N-sulfation of glucosamine (GlcNAc) of the glycosaminoglycan in heparan sulfate. Modifies the GlcNAc-GlcA disaccharide repeating sugar backbone to make N-sulfated heparosan, a prerequisite substrate for later modifications in heparin biosynthesis. Has high deacetylase activity but low sulfotransferase activity. This Homo sapiens (Human) protein is Bifunctional heparan sulfate N-deacetylase/N-sulfotransferase 3.